Here is a 184-residue protein sequence, read N- to C-terminus: Phosphorelay intermediate protein YPD1 (184 aa).

One can recognise an HPt domain in the interval 30–125 (EEGFSKSLVE…SAENVAVNDG (96 aa)). Phosphohistidine is present on histidine 69. Residues 120–152 (VAVNDGETNPENGSNGNETSNNKTNTSNIPDES) are disordered. The span at 125 to 147 (GETNPENGSNGNETSNNKTNTSN) shows a compositional bias: low complexity.

The protein belongs to the YPD1 family.

It is found in the cytoplasm. It localises to the nucleus. Phosphorelay intermediate protein that is part of the bifurcated SLN1-YPD1-SKN7/SSK1 two-component regulatory system, which controls activity of the HOG1 pathway and gene expression in response to oxidative stress and probably to changes in the osmolarity of the extracellular environment. Catalyzes the phosphoryl group transfer from the membrane-bound histidine kinase SLN1 to two distinct response regulators SSK1 and SKN7. The polypeptide is Phosphorelay intermediate protein YPD1 (YPD1) (Candida albicans (strain SC5314 / ATCC MYA-2876) (Yeast)).